Consider the following 425-residue polypeptide: Serine--tRNA ligase (425 aa).

231 to 233 serves as a coordination point for L-serine; it reads TAE. ATP is bound at residue 262-264; sequence RSE. E285 is a binding site for L-serine. 349-352 serves as a coordination point for ATP; it reads EISS. S385 contributes to the L-serine binding site.

It belongs to the class-II aminoacyl-tRNA synthetase family. Type-1 seryl-tRNA synthetase subfamily. Homodimer. The tRNA molecule binds across the dimer.

The protein localises to the cytoplasm. The enzyme catalyses tRNA(Ser) + L-serine + ATP = L-seryl-tRNA(Ser) + AMP + diphosphate + H(+). It carries out the reaction tRNA(Sec) + L-serine + ATP = L-seryl-tRNA(Sec) + AMP + diphosphate + H(+). Its pathway is aminoacyl-tRNA biosynthesis; selenocysteinyl-tRNA(Sec) biosynthesis; L-seryl-tRNA(Sec) from L-serine and tRNA(Sec): step 1/1. Functionally, catalyzes the attachment of serine to tRNA(Ser). Is also able to aminoacylate tRNA(Sec) with serine, to form the misacylated tRNA L-seryl-tRNA(Sec), which will be further converted into selenocysteinyl-tRNA(Sec). The protein is Serine--tRNA ligase of Bartonella henselae (strain ATCC 49882 / DSM 28221 / CCUG 30454 / Houston 1) (Rochalimaea henselae).